The sequence spans 365 residues: MSNYNKPIQLLCVLVVVLFFINNQFVQRTTWSRGLRSPPLDSRIFQEKSEIERSTLPPIPKGFLSSKLASTARLANHIFELVSVYGMAKSLNRKPAIFVEDSKYNLLITGVRKVLPGLLDEFQIFEYPVHNKATKVPLSEKCCIFDNPDKFNNISSEYLHLTGHFYQSWKYFDKYKEKVQSFVKPAIDFSPLPNSDSSNFISRICIHIRRTDFVDGQHHSSNVSFIKPALEFIKEREQKDVNKKMLTVIMGDDPDFEAKMFEGTVRAKKEAKIEETTKYFVSENTPQDDLAYSHYSCDATLITAPSSTFGWWLGYLSKGQAVYYQDIRSTNDVNYKKGVLDPDDFFVPSWTSIMLDENKKVVVVT.

It belongs to the glycosyltransferase 11 family.

The polypeptide is Putative glycosyltransferase C06E1.7 (Caenorhabditis elegans).